Consider the following 207-residue polypeptide: Large ribosomal subunit protein uL3 (207 aa).

It belongs to the universal ribosomal protein uL3 family. Part of the 50S ribosomal subunit. Forms a cluster with proteins L14 and L19.

In terms of biological role, one of the primary rRNA binding proteins, it binds directly near the 3'-end of the 23S rRNA, where it nucleates assembly of the 50S subunit. This chain is Large ribosomal subunit protein uL3, found in Desulforapulum autotrophicum (strain ATCC 43914 / DSM 3382 / VKM B-1955 / HRM2) (Desulfobacterium autotrophicum).